The primary structure comprises 93 residues: RNA-binding protein Hfq (93 aa).

The region spanning 9 to 68 is the Sm domain; the sequence is DPYLNALRRERIPVSIYLVNGIKLQGQIESFDQFVILLKNTVSQMVYKHAISTVVPARAI. Low complexity predominate over residues 70-81; that stretch reads HNNNSNHAHQAA. A disordered region spans residues 70–93; the sequence is HNNNSNHAHQAAPVQSAEVVEKVE.

Belongs to the Hfq family. As to quaternary structure, homohexamer.

Functionally, RNA chaperone that binds small regulatory RNA (sRNAs) and mRNAs to facilitate mRNA translational regulation in response to envelope stress, environmental stress and changes in metabolite concentrations. Also binds with high specificity to tRNAs. The polypeptide is RNA-binding protein Hfq (Glaesserella parasuis serovar 5 (strain SH0165) (Haemophilus parasuis)).